The chain runs to 264 residues: tRNA pseudouridine synthase A (264 aa).

The Nucleophile role is filled by Asp51. Residue Tyr109 participates in substrate binding.

It belongs to the tRNA pseudouridine synthase TruA family. In terms of assembly, homodimer.

The catalysed reaction is uridine(38/39/40) in tRNA = pseudouridine(38/39/40) in tRNA. In terms of biological role, formation of pseudouridine at positions 38, 39 and 40 in the anticodon stem and loop of transfer RNAs. The sequence is that of tRNA pseudouridine synthase A from Polaromonas sp. (strain JS666 / ATCC BAA-500).